The following is a 449-amino-acid chain: Elongation factor 1-alpha (449 aa).

Residues 5–230 enclose the tr-type G domain; sequence KVHINIVVIG…DQIQEPKRPS (226 aa). The segment at 14-21 is G1; the sequence is GHVDSGKS. 14-21 contributes to the GTP binding site; that stretch reads GHVDSGKS. K55 bears the N6,N6-dimethyllysine mark. The interval 70–74 is G2; the sequence is GITID. Residue K79 is modified to N6,N6,N6-trimethyllysine. The segment at 91 to 94 is G3; it reads DAPG. GTP-binding positions include 91–95 and 153–156; these read DAPGH and NKMD. Residues 153 to 156 are G4; that stretch reads NKMD. Residue K187 is modified to N6,N6,N6-trimethyllysine. The G5 stretch occupies residues 194 to 196; the sequence is SGF. An N6-methyllysine modification is found at K261. 5-glutamyl glycerylphosphorylethanolamine is present on E289. K306 is modified (N6,N6,N6-trimethyllysine). E362 is subject to 5-glutamyl glycerylphosphorylethanolamine. K396 is subject to N6,N6,N6-trimethyllysine.

It belongs to the TRAFAC class translation factor GTPase superfamily. Classic translation factor GTPase family. EF-Tu/EF-1A subfamily.

Its subcellular location is the cytoplasm. Its function is as follows. This protein promotes the GTP-dependent binding of aminoacyl-tRNA to the A-site of ribosomes during protein biosynthesis. This is Elongation factor 1-alpha (EF1) from Manihot esculenta (Cassava).